Consider the following 445-residue polypeptide: Chromosome partition protein MukF (445 aa).

The segment at 213-241 (LSETSSTLRELQDTLQAASDELQTQILDI) is leucine-zipper.

Belongs to the MukF family. In terms of assembly, interacts, and probably forms a ternary complex, with MukE and MukB via its C-terminal region. The complex formation is stimulated by calcium or magnesium. It is required for an interaction between MukE and MukB.

The protein resides in the cytoplasm. The protein localises to the nucleoid. In terms of biological role, involved in chromosome condensation, segregation and cell cycle progression. May participate in facilitating chromosome segregation by condensation DNA from both sides of a centrally located replisome during cell division. Not required for mini-F plasmid partitioning. Probably acts via its interaction with MukB and MukE. Overexpression results in anucleate cells. It has a calcium binding activity. This chain is Chromosome partition protein MukF, found in Vibrio campbellii (strain ATCC BAA-1116).